Reading from the N-terminus, the 85-residue chain is Photosystem I reaction center subunit PsaK (85 aa).

Helical transmembrane passes span 12 to 34 and 54 to 76; these read TVTW…IAVG and GGMG…IGAI.

It belongs to the PsaG/PsaK family.

The protein localises to the cellular thylakoid membrane. The polypeptide is Photosystem I reaction center subunit PsaK (Parasynechococcus marenigrum (strain WH8102)).